The sequence spans 415 residues: Beta-2 adrenergic receptor (415 aa).

Residues 1–34 (MGQPANRSVFLLAPNGSHAPDQGDSQERSEAWVV) are Extracellular-facing. Residues asparagine 6 and asparagine 15 are each glycosylated (N-linked (GlcNAc...) asparagine). The helical transmembrane segment at 35-58 (GMGIVMSLIVLAIVFGNVLVITAI) threads the bilayer. Over 59 to 71 (ARFERLQTVTNYF) the chain is Cytoplasmic. A helical transmembrane segment spans residues 72 to 95 (ITSLACADLVMGLAVVPFGASHIL). The Extracellular segment spans residues 96-106 (MKMWTFGNFWC). 2 disulfides stabilise this stretch: cysteine 106–cysteine 191 and cysteine 184–cysteine 190. Residues 107–129 (EFWTSIDVLCVTASIETLCVIAV) traverse the membrane as a helical segment. Over 130-150 (DRYFAITSPFKYQSLLTKNKA) the chain is Cytoplasmic. At tyrosine 141 the chain carries Phosphotyrosine. Residues 151-174 (RVVILMVWIVSGLTSFLPIQMHWY) traverse the membrane as a helical segment. Topologically, residues 175 to 196 (RATHQEAINCYAKETCCDFFTN) are extracellular. A helical membrane pass occupies residues 197–220 (QAYAIASSIVSFYLPLVVMVFVYS). The Cytoplasmic segment spans residues 221–274 (RVFQVAQRQLQKIDRSEGRFHAQNLSQVEQDGRSGHGHRRSSKFCLKEHKALKT). Position 246 is a phosphoserine (serine 246). Residues serine 261 and serine 262 each carry the phosphoserine; by PKA modification. Cysteine 265 carries the S-palmitoyl cysteine lipid modification. Residues 275 to 298 (LGIIMGTFTLCWLPFFIVNIVHVI) form a helical membrane-spanning segment. At 299-305 (QDNLIPK) the chain is on the extracellular side. The helical transmembrane segment at 306-329 (EVYILLNWVGYVNSAFNPLIYCRS) threads the bilayer. Topologically, residues 330–415 (PDFRIAFQEL…RNCSTNDSLL (86 aa)) are cytoplasmic. Cysteine 341 is lipidated: S-palmitoyl cysteine. Residues serine 345 and serine 346 each carry the phosphoserine; by PKA modification. Serine 355 carries the phosphoserine; by BARK modification. The disordered stretch occupies residues 379–415 (SELLCEDPPGTEDRQGTVPSDSVDSQGRNCSTNDSLL). 4-hydroxyproline is present on residues proline 387 and proline 397. The span at 395 to 415 (TVPSDSVDSQGRNCSTNDSLL) shows a compositional bias: polar residues. Residues 412 to 415 (DSLL) carry the PDZ-binding motif.

Belongs to the G-protein coupled receptor 1 family. Adrenergic receptor subfamily. ADRB2 sub-subfamily. As to quaternary structure, binds NHERF1 and GPRASP1. Interacts with ARRB1 and ARRB2. Interacts with SRC. Interacts with USP20 and USP33. Interacts with VHL; the interaction, which is increased on hydroxylation of ADRB2, ubiquitinates ADRB2 leading to its degradation. Interacts with EGLN3; the interaction hydroxylates ADRB2 facilitating VHL-E3 ligase-mediated ubiquitination. Interacts (via PDZ-binding motif) with SNX27 (via PDZ domain); the interaction is required when endocytosed to prevent degradation in lysosomes and promote recycling to the plasma membrane. Interacts with CNIH4. Interacts with ARRDC3. Interacts with NEDD4. Interacts with MARCHF2. In terms of processing, palmitoylated; may reduce accessibility of Ser-345 and Ser-346 by anchoring Cys-341 to the plasma membrane. Agonist stimulation promotes depalmitoylation and further allows Ser-345 and Ser-346 phosphorylation. Phosphorylated by PKA and BARK upon agonist stimulation, which mediates homologous desensitization of the receptor. PKA-mediated phosphorylation seems to facilitate phosphorylation by BARK. Post-translationally, phosphorylation of Tyr-141 is induced by insulin and leads to supersensitization of the receptor. In terms of processing, polyubiquitinated. Agonist-induced ubiquitination leads to sort internalized receptors to the lysosomes for degradation. Deubiquitination by USP20 and USP33, leads to ADRB2 recycling and resensitization after prolonged agonist stimulation. USP20 and USP33 are constitutively associated and are dissociated immediately after agonist stimulation. Ubiquitination by the VHL-E3 ligase complex is oxygen-dependent. Hydroxylation by EGLN3 occurs only under normoxia and increases the interaction with VHL and the subsequent ubiquitination and degradation of ADRB2. Post-translationally, palmitoylated. Mainly palmitoylated at Cys-341. Palmitoylation may reduce accessibility of phosphorylation sites by anchoring the receptor to the plasma membrane. Agonist stimulation promotes depalmitoylation and further allows Ser-345 and Ser-346 phosphorylation. Also undergoes transient, ligand-induced palmitoylation at Cys-265 probably by ZDHHC9, ZDHHC14 and ZDHHC18 within the Golgi. Palmitoylation at Cys-265 requires phosphorylation by PKA and receptor internalization and stabilizes the receptor. Could be depalmitoylated by LYPLA1 at the plasma membrane.

It localises to the cell membrane. The protein resides in the early endosome. It is found in the golgi apparatus. Functionally, beta-adrenergic receptors mediate the catecholamine-induced activation of adenylate cyclase through the action of G proteins. The beta-2-adrenergic receptor binds epinephrine with an approximately 30-fold greater affinity than it does norepinephrine. This Canis lupus familiaris (Dog) protein is Beta-2 adrenergic receptor (ADRB2).